Here is a 283-residue protein sequence, read N- to C-terminus: Thymidylate synthase (283 aa).

Residue arginine 22 participates in dUMP binding. Cysteine 160 (nucleophile) is an active-site residue. Residues 180-183, asparagine 191, and 221-223 contribute to the dUMP site; these read RSCD and HIY. Aspartate 183 contributes to the (6R)-5,10-methylene-5,6,7,8-tetrahydrofolate binding site. Serine 282 serves as a coordination point for (6R)-5,10-methylene-5,6,7,8-tetrahydrofolate.

The protein belongs to the thymidylate synthase family. Bacterial-type ThyA subfamily. As to quaternary structure, homodimer.

It is found in the cytoplasm. The enzyme catalyses dUMP + (6R)-5,10-methylene-5,6,7,8-tetrahydrofolate = 7,8-dihydrofolate + dTMP. It participates in pyrimidine metabolism; dTTP biosynthesis. Its function is as follows. Catalyzes the reductive methylation of 2'-deoxyuridine-5'-monophosphate (dUMP) to 2'-deoxythymidine-5'-monophosphate (dTMP) while utilizing 5,10-methylenetetrahydrofolate (mTHF) as the methyl donor and reductant in the reaction, yielding dihydrofolate (DHF) as a by-product. This enzymatic reaction provides an intracellular de novo source of dTMP, an essential precursor for DNA biosynthesis. In Histophilus somni (strain 129Pt) (Haemophilus somnus), this protein is Thymidylate synthase.